A 562-amino-acid chain; its full sequence is Phosphopantothenoylcysteine decarboxylase subunit SIS2 (562 aa).

The segment covering 1 to 10 (MTAVASTSGK) has biased composition (polar residues). 3 disordered regions span residues 1 to 63 (MTAV…SNAT), 97 to 165 (FSDL…KDYD), and 490 to 562 (GYPK…DKHQ). The segment covering 27–42 (GQKEILLDHEDAKGKD) has biased composition (basic and acidic residues). Composition is skewed to polar residues over residues 44 to 63 (IINSPVSGRQSISPTLSNAT) and 99 to 113 (DLKQQQKQDSLTQLK). Phosphoserine occurs at positions 47, 50, 54, and 56. Low complexity predominate over residues 121-134 (SPNSNPAPVSNSIP). Residues 142–156 (NHTNTSRTTQLSGSP) are compositionally biased toward polar residues. The residue at position 155 (Ser-155) is a Phosphoserine. Residues 496-553 (EEEDDDEDEEEDDDEEEDTEDKNENNNDDDDDDDDDDDDDDDDDDDDDDDDEDEDEAE) show a composition bias toward acidic residues.

Belongs to the HFCD (homooligomeric flavin containing Cys decarboxylase) superfamily. In terms of assembly, interacts with the C-terminal domain of PPZ1. Component of the phosphopantothenoylcysteine decarboxylase (PPCDC) complex, a heterotrimer composed of CAB3, SIS2 and VHS3.

It is found in the nucleus. It localises to the cytoplasm. Its function is as follows. Component of the phosphopantothenoylcysteine decarboxylase (PPCDC) involved in the coenzyme A synthesis. Acts as an inhibitory subunit of protein phosphatase PPZ1, which is involved in many cellular processes such as G1-S transition or salt tolerance. Also modulates the expression of the ENA1 ATPase. This Saccharomyces cerevisiae (strain ATCC 204508 / S288c) (Baker's yeast) protein is Phosphopantothenoylcysteine decarboxylase subunit SIS2 (SIS2).